The primary structure comprises 229 residues: Small ribosomal subunit protein uS2c (229 aa).

The protein belongs to the universal ribosomal protein uS2 family.

It is found in the plastid. Its subcellular location is the chloroplast. The protein is Small ribosomal subunit protein uS2c (rps2) of Trieres chinensis (Marine centric diatom).